The sequence spans 132 residues: Small ribosomal subunit protein uS8c (132 aa).

This sequence belongs to the universal ribosomal protein uS8 family. Part of the 30S ribosomal subunit.

The protein localises to the plastid. The protein resides in the chloroplast. In terms of biological role, one of the primary rRNA binding proteins, it binds directly to 16S rRNA central domain where it helps coordinate assembly of the platform of the 30S subunit. This is Small ribosomal subunit protein uS8c (rps8) from Nandina domestica (Heavenly bamboo).